A 370-amino-acid polypeptide reads, in one-letter code: Putative F-box protein At1g47390 (370 aa).

In terms of domain architecture, F-box spans 1-47 (MAPEEKLPCELIEEILSRVPPESLVRFRTVSKKWNALFDDKMFINNH).

The chain is Putative F-box protein At1g47390 from Arabidopsis thaliana (Mouse-ear cress).